Reading from the N-terminus, the 452-residue chain is NADH-quinone oxidoreductase subunit N 2 (452 aa).

14 helical membrane-spanning segments follow: residues 6–26 (VLIP…YGFI), 33–53 (TYIL…FNFG), 70–90 (TLRI…YSDL), 97–117 (SVEY…MIVA), 120–140 (LLIL…LAGF), 154–174 (YFIL…FFYA), 194–214 (ILLG…LAPF), 232–252 (FLST…FLSI), 258–278 (IQDL…VLAL), 286–306 (MLAY…LLPE), 311–331 (ISLI…FAFI), 355–375 (FCII…GFIV), 387–407 (GYGS…FYYL), and 432–452 (ALSG…LLIF).

The protein belongs to the complex I subunit 2 family. In terms of assembly, NDH-1 is composed of 14 different subunits. Subunits NuoA, H, J, K, L, M, N constitute the membrane sector of the complex.

Its subcellular location is the cell inner membrane. It carries out the reaction a quinone + NADH + 5 H(+)(in) = a quinol + NAD(+) + 4 H(+)(out). Functionally, NDH-1 shuttles electrons from NADH, via FMN and iron-sulfur (Fe-S) centers, to quinones in the respiratory chain. The immediate electron acceptor for the enzyme in this species is believed to be ubiquinone. Couples the redox reaction to proton translocation (for every two electrons transferred, four hydrogen ions are translocated across the cytoplasmic membrane), and thus conserves the redox energy in a proton gradient. The protein is NADH-quinone oxidoreductase subunit N 2 of Thermodesulfovibrio yellowstonii (strain ATCC 51303 / DSM 11347 / YP87).